The chain runs to 172 residues: 2S seed storage-like protein (172 aa).

Residues 1–35 (MGVFSPSTTRLTLKWFSLSVALFLLFHWGIPSVDG) form the signal peptide. Positions 108–172 (FMDSDSQEDA…RYSMTGSSFK (65 aa)) are disordered. The segment covering 151–160 (EPPRRCDIQR) has biased composition (basic and acidic residues).

It belongs to the 2S seed storage albumins family.

The sequence is that of 2S seed storage-like protein from Picea glauca (White spruce).